Here is a 357-residue protein sequence, read N- to C-terminus: 3-dehydroquinate synthase (357 aa).

NAD(+) is bound by residues 104–108 (GVVGD), 128–129 (TT), Lys-141, and 168–171 (FLET). Zn(2+) is bound by residues Glu-183, His-243, and His-260.

The protein belongs to the sugar phosphate cyclases superfamily. Dehydroquinate synthase family. Requires Co(2+) as cofactor. It depends on Zn(2+) as a cofactor. NAD(+) serves as cofactor.

Its subcellular location is the cytoplasm. It catalyses the reaction 7-phospho-2-dehydro-3-deoxy-D-arabino-heptonate = 3-dehydroquinate + phosphate. The protein operates within metabolic intermediate biosynthesis; chorismate biosynthesis; chorismate from D-erythrose 4-phosphate and phosphoenolpyruvate: step 2/7. Catalyzes the conversion of 3-deoxy-D-arabino-heptulosonate 7-phosphate (DAHP) to dehydroquinate (DHQ). The chain is 3-dehydroquinate synthase from Streptococcus pyogenes serotype M49 (strain NZ131).